The primary structure comprises 282 residues: Heat stress transcription factor A-7b (282 aa).

Low complexity-rich tracts occupy residues 1-11 and 120-134; these read MDPSSSSRARS and SSSS…QSQP. Disordered stretches follow at residues 1–24 and 117–139; these read MDPS…LQEA and RRTS…AHDP. A DNA-binding region spans residues 26–120; it reads PSPFLTKTFE…LLKSIKRRTS (95 aa). The interval 137–196 is hydrophobic repeat HR-A/B; the sequence is HDPGVELPQLREERHVLMMEISTLRQEEQRARGYVQAMEQRINGAEKKQRHMMSFLRRAV. The Nuclear localization signal signature appears at 208-212; the sequence is QKRDR. Positions 232-240 match the Nuclear export signal motif; that stretch reads LSELEALAL. Positions 259-268 match the AHA motif; that stretch reads DGFWEELLMN.

It belongs to the HSF family. Class A subfamily. Homotrimer. Exhibits temperature-dependent phosphorylation.

It localises to the cytoplasm. It is found in the nucleus. In terms of biological role, transcriptional activator that specifically binds DNA sequence 5'-AGAAnnTTCT-3' known as heat shock promoter elements (HSE). The chain is Heat stress transcription factor A-7b (HSFA7B) from Arabidopsis thaliana (Mouse-ear cress).